We begin with the raw amino-acid sequence, 544 residues long: Esterase-6 (544 aa).

Positions 1-21 are cleaved as a signal peptide; that stretch reads MNYVGLGLIIVLSCLWLGSNA. Residue Asn42 is glycosylated (N-linked (GlcNAc...) asparagine). A disulfide bridge connects residues Cys86 and Cys105. Catalysis depends on Ser209, which acts as the Acyl-ester intermediate. The cysteines at positions 261 and 273 are disulfide-linked. Residues Asn420 and Asn456 are each glycosylated (N-linked (GlcNAc...) asparagine). The active-site Charge relay system is the His466. An N-linked (GlcNAc...) asparagine glycan is attached at Asn506. Residues Cys514 and Cys535 are joined by a disulfide bond.

The protein belongs to the type-B carboxylesterase/lipase family. As to quaternary structure, monomer. Specifically expressed in the ejaculatory bulbs of male.

Its subcellular location is the secreted. It carries out the reaction a carboxylic ester + H2O = an alcohol + a carboxylate + H(+). Transferred from the ejaculatory bulbs of males to the female genitals upon copulation, plays an important role in the reproductive biology. This chain is Esterase-6 (Est-6), found in Drosophila melanogaster (Fruit fly).